The primary structure comprises 168 residues: Phosphopantetheine adenylyltransferase (168 aa).

Position 14 (T14) interacts with substrate. Residues T14–F15 and H22 each bind ATP. Positions 46, 78, and 92 each coordinate substrate. Residues G93–R95, E103, and Y128–S134 contribute to the ATP site.

It belongs to the bacterial CoaD family. As to quaternary structure, homohexamer. The cofactor is Mg(2+).

It is found in the cytoplasm. The catalysed reaction is (R)-4'-phosphopantetheine + ATP + H(+) = 3'-dephospho-CoA + diphosphate. It participates in cofactor biosynthesis; coenzyme A biosynthesis; CoA from (R)-pantothenate: step 4/5. In terms of biological role, reversibly transfers an adenylyl group from ATP to 4'-phosphopantetheine, yielding dephospho-CoA (dPCoA) and pyrophosphate. This Xanthomonas axonopodis pv. citri (strain 306) protein is Phosphopantetheine adenylyltransferase.